The primary structure comprises 240 residues: Ribose-5-phosphate isomerase (240 aa).

Substrate is bound by residues serine 34–threonine 37, aspartate 88–aspartate 91, and lysine 101–glycine 104. Glutamate 110 acts as the Proton acceptor in catalysis. A substrate-binding site is contributed by lysine 128.

It belongs to the ribose 5-phosphate isomerase family.

The protein resides in the cytoplasm. It carries out the reaction aldehydo-D-ribose 5-phosphate = D-ribulose 5-phosphate. The protein operates within carbohydrate degradation; pentose phosphate pathway; D-ribose 5-phosphate from D-ribulose 5-phosphate (non-oxidative stage): step 1/1. Its function is as follows. Involved in the first step of the non-oxidative branch of the pentose phosphate pathway. It catalyzes the reversible conversion of ribose-5-phosphate to ribulose 5-phosphate. The polypeptide is Ribose-5-phosphate isomerase (RKI1) (Candida albicans (strain SC5314 / ATCC MYA-2876) (Yeast)).